The primary structure comprises 217 residues: Adenylate kinase (217 aa).

Residue 10–15 (GIGKGT) participates in ATP binding. An NMP region spans residues 30-59 (ATGDIFRKNFQENTPLGKESKKFINKGLLV). Residues Thr-31, Arg-36, 57–59 (LLV), 85–88 (GFPR), and Gln-92 each bind AMP. Residues 126–163 (GRRICSHCGKVYHLDNLPPKIEGICDKDQKKLIQREDD) are LID. Arg-127 contacts ATP. Zn(2+) contacts are provided by Cys-130 and Cys-133. An ATP-binding site is contributed by 136 to 137 (VY). Residues Cys-150 and Asp-153 each contribute to the Zn(2+) site. 2 residues coordinate AMP: Arg-160 and Arg-171. An ATP-binding site is contributed by Gln-199.

Belongs to the adenylate kinase family. Monomer.

Its subcellular location is the cytoplasm. The enzyme catalyses AMP + ATP = 2 ADP. Its pathway is purine metabolism; AMP biosynthesis via salvage pathway; AMP from ADP: step 1/1. In terms of biological role, catalyzes the reversible transfer of the terminal phosphate group between ATP and AMP. Plays an important role in cellular energy homeostasis and in adenine nucleotide metabolism. This chain is Adenylate kinase, found in Phytoplasma australiense.